Here is a 451-residue protein sequence, read N- to C-terminus: 3-carboxy-cis,cis-muconate cycloisomerase (451 aa).

Belongs to the class-II fumarase/aspartase family. Homotetramer.

It carries out the reaction 2-(carboxymethyl)-5-oxo-2,5-dihydro-2-furoate = 3-carboxy-cis,cis-muconate + H(+). It functions in the pathway aromatic compound metabolism; beta-ketoadipate pathway; 5-oxo-4,5-dihydro-2-furylacetate from 3-carboxy-cis,cis-muconate: step 1/2. Functionally, catalyzes an anti cycloisomerization. The sequence is that of 3-carboxy-cis,cis-muconate cycloisomerase (pcaB) from Acinetobacter baylyi (strain ATCC 33305 / BD413 / ADP1).